The sequence spans 171 residues: uncharacterized protein (171 aa).

This sequence to A.aeolicus aq_616.

This is an uncharacterized protein from Aquifex aeolicus (strain VF5).